A 1030-amino-acid polypeptide reads, in one-letter code: Tricorn protease (1030 aa).

A six-bladed beta propeller region spans residues 1-270; it reads MANLLQNPDI…DNVKSLDIGP (270 aa). Residues 93 to 94 are binds the substrate's C-terminus; that stretch reads RR. The tract at residues 286-635 is seven-bladed beta propeller; that stretch reads LEDFSMSPGD…EEEKSLNIDA (350 aa). The interval 641-712 is C-1; that stretch reads NVKEDFAEMY…RTSHSYEMGG (72 aa). Residue His706 is the Charge relay system of the active site. The PDZ-like stretch occupies residues 721–816; sequence RAGRIACDFK…SGFVDVLQDD (96 aa). A C-2 region spans residues 817–1022; it reads RYIRYRAWVE…IEMVLADLEK (206 aa). 877–879 provides a ligand contact to substrate; sequence GGG. Ser926 functions as the Nucleophile in the catalytic mechanism. A substrate-binding site is contributed by 954-956; sequence GIS. The Charge relay system role is filled by Glu984.

This sequence belongs to the peptidase S41B family. As to quaternary structure, part of the tricorn proteolytic complex.

The protein localises to the cytoplasm. Tricorn degrades oligopeptides in a sequential manner. This chain is Tricorn protease (tri), found in Thermoplasma volcanium (strain ATCC 51530 / DSM 4299 / JCM 9571 / NBRC 15438 / GSS1).